A 100-amino-acid chain; its full sequence is Putative pterin-4-alpha-carbinolamine dehydratase (100 aa).

This sequence belongs to the pterin-4-alpha-carbinolamine dehydratase family.

The enzyme catalyses (4aS,6R)-4a-hydroxy-L-erythro-5,6,7,8-tetrahydrobiopterin = (6R)-L-erythro-6,7-dihydrobiopterin + H2O. This Alteromonas mediterranea (strain DSM 17117 / CIP 110805 / LMG 28347 / Deep ecotype) protein is Putative pterin-4-alpha-carbinolamine dehydratase.